Here is a 122-residue protein sequence, read N- to C-terminus: Large ribosomal subunit protein uL18 (122 aa).

Positions 1–20 (MLKKVSKNTNRQGRHQRVRN) are enriched in basic residues. Positions 1 to 22 (MLKKVSKNTNRQGRHQRVRNKI) are disordered.

This sequence belongs to the universal ribosomal protein uL18 family. As to quaternary structure, part of the 50S ribosomal subunit; part of the 5S rRNA/L5/L18/L25 subcomplex. Contacts the 5S and 23S rRNAs.

Functionally, this is one of the proteins that bind and probably mediate the attachment of the 5S RNA into the large ribosomal subunit, where it forms part of the central protuberance. This chain is Large ribosomal subunit protein uL18, found in Alkaliphilus metalliredigens (strain QYMF).